Consider the following 370-residue polypeptide: 4-hydroxy-3-methylbut-2-en-1-yl diphosphate synthase (flavodoxin) (370 aa).

[4Fe-4S] cluster-binding residues include Cys-268, Cys-271, Cys-303, and Glu-310.

It belongs to the IspG family. [4Fe-4S] cluster is required as a cofactor.

It carries out the reaction (2E)-4-hydroxy-3-methylbut-2-enyl diphosphate + oxidized [flavodoxin] + H2O + 2 H(+) = 2-C-methyl-D-erythritol 2,4-cyclic diphosphate + reduced [flavodoxin]. Its pathway is isoprenoid biosynthesis; isopentenyl diphosphate biosynthesis via DXP pathway; isopentenyl diphosphate from 1-deoxy-D-xylulose 5-phosphate: step 5/6. In terms of biological role, converts 2C-methyl-D-erythritol 2,4-cyclodiphosphate (ME-2,4cPP) into 1-hydroxy-2-methyl-2-(E)-butenyl 4-diphosphate. The polypeptide is 4-hydroxy-3-methylbut-2-en-1-yl diphosphate synthase (flavodoxin) (Bacillus cereus (strain G9842)).